Reading from the N-terminus, the 782-residue chain is Coiled-coil alpha-helical rod protein 1 (782 aa).

2 stretches are compositionally biased toward basic and acidic residues: residues 62 to 74 (ERDVSSDRQEPGR) and 208 to 218 (ETRRAGEAKEL). Disordered stretches follow at residues 62–82 (ERDVSSDRQEPGRRGRSWGLE) and 191–218 (SSLTSKAEGLEKSLSSLETRRAGEAKEL). Coiled-coil stretches lie at residues 82-314 (EGSQ…ELTR), 344-435 (LMVQ…VVNA), and 498-691 (VADV…QQEG).

The protein localises to the cytoplasm. The protein resides in the nucleus. Its function is as follows. May be a regulator of keratinocyte proliferation or differentiation. This Pongo pygmaeus (Bornean orangutan) protein is Coiled-coil alpha-helical rod protein 1 (CCHCR1).